Reading from the N-terminus, the 195-residue chain is Thioredoxin reductase-like selenoprotein T (195 aa).

Residues 1 to 19 form the signal peptide; it reads MRLLLLLLVAASAVVRSDA. Positions 46-49 form a cross-link, cysteinyl-selenocysteine (Cys-Sec); the sequence is CVSU. Selenocysteine 49 is a non-standard amino acid (selenocysteine). Residues 85 to 103 form a helical membrane-spanning segment; the sequence is IASFLSVFKLVLIGLIIVG.

It belongs to the SelWTH family. Selenoprotein T subfamily. Post-translationally, may contain a selenide-sulfide bond between Cys-46 and Sec-49. This bond is speculated to serve as redox-active pair.

The protein resides in the endoplasmic reticulum membrane. It catalyses the reaction [thioredoxin]-dithiol + NADP(+) = [thioredoxin]-disulfide + NADPH + H(+). Its function is as follows. Selenoprotein with thioredoxin reductase-like oxidoreductase activity. Protects dopaminergic neurons against oxidative stress and cell death. Involved in ADCYAP1/PACAP-induced calcium mobilization and neuroendocrine secretion. Plays a role in fibroblast anchorage and redox regulation. In gastric smooth muscle, modulates the contraction processes through the regulation of calcium release and MYLK activation. In pancreatic islets, involved in the control of glucose homeostasis, contributes to prolonged ADCYAP1/PACAP-induced insulin secretion. The protein is Thioredoxin reductase-like selenoprotein T of Bos taurus (Bovine).